The primary structure comprises 205 residues: Arginine exporter protein ArgO (205 aa).

The next 6 helical transmembrane spans lie at 1 to 21, 42 to 62, 67 to 87, 111 to 131, 147 to 167, and 185 to 205; these read MLAVYLHGFILSAAMILPLGP, LCALSDIILICAGIFGGSALL, LLLALVTWGGVAFLMWYGWGA, ILVTLLAVTWLNPHVYLDTFV, WFALGAVTASIVWFFALALLA, and LFVGGVMGFIAFQLARQGFGL.

It belongs to the LysE/ArgO transporter (TC 2.A.75) family.

The protein localises to the cell inner membrane. The catalysed reaction is L-arginine(in) = L-arginine(out). In terms of biological role, involved in the export of arginine. Important to control the intracellular level of arginine and the correct balance between arginine and lysine. The chain is Arginine exporter protein ArgO from Yersinia pseudotuberculosis serotype IB (strain PB1/+).